The sequence spans 102 residues: Small ribosomal subunit protein uS10 (102 aa).

This sequence belongs to the universal ribosomal protein uS10 family. In terms of assembly, part of the 30S ribosomal subunit.

Its function is as follows. Involved in the binding of tRNA to the ribosomes. This is Small ribosomal subunit protein uS10 from Geobacillus kaustophilus (strain HTA426).